Consider the following 583-residue polypeptide: Complement factor I (583 aa).

An N-terminal signal peptide occupies residues 1 to 18 (MKLLHVFLLFLCFHLRFC). Disulfide bonds link cysteine 33/cysteine 255, cysteine 43/cysteine 54, cysteine 48/cysteine 59, cysteine 61/cysteine 93, cysteine 67/cysteine 86, cysteine 75/cysteine 106, cysteine 141/cysteine 181, cysteine 154/cysteine 214, cysteine 186/cysteine 196, cysteine 229/cysteine 247, cysteine 241/cysteine 256, cysteine 259/cysteine 271, cysteine 266/cysteine 284, cysteine 278/cysteine 293, cysteine 327/cysteine 453, cysteine 365/cysteine 381, and cysteine 373/cysteine 444. The region spanning 55–108 (IEGTCVCKLPYQCPKNGTAVCATNRRSFPTYCQQKSLECLHPGTKFLNNGTCTA) is the Kazal-like domain. Asparagine 70 is a glycosylation site (N-linked (GlcNAc...) asparagine). Asparagine 103 carries N-linked (GlcNAc...) (complex) asparagine glycosylation. In terms of domain architecture, SRCR spans 114-212 (VSLKHGNTDS…TMGYQDFADV (99 aa)). Asparagine 177 carries N-linked (GlcNAc...) asparagine glycosylation. LDL-receptor class A domains are found at residues 213–257 (VCYT…LCCK) and 258–294 (ACQG…VGCA). Positions 239, 242, 244, 246, 252, and 253 each coordinate Ca(2+). Tyrosine 276, asparagine 279, glutamate 281, aspartate 283, aspartate 289, and glutamate 290 together coordinate Ca(2+). A Peptidase S1 domain is found at 340–574 (IVGGKRAQLG…YFDWISYHVG (235 aa)). Residues histidine 380 and aspartate 429 each act as charge relay system in the active site. Asparagine 464 and asparagine 494 each carry an N-linked (GlcNAc...) asparagine glycan. 3 disulfide bridges follow: cysteine 467–cysteine 531, cysteine 495–cysteine 510, and cysteine 521–cysteine 550. The active-site Charge relay system is the serine 525. A glycan (N-linked (GlcNAc...) asparagine) is linked at asparagine 536.

The protein belongs to the peptidase S1 family. As to quaternary structure, heterodimer of a light and heavy chains; disulfide-linked. The fully processed and mature protein circulates as a zymogen, and is allosterically activated by substrate-induced remodeling of the active site. Interacts with C3b. Interacts with complement factor H. In terms of assembly, (Microbial infection) Interacts with Staphylococcus aureus clumping factor A/ClfA; this interaction enhances cleavage of C3b into iC3b by CFI. Expressed in the liver by hepatocytes. Also present in other cells such as monocytes, fibroblasts or keratinocytes.

Its subcellular location is the secreted. It localises to the extracellular space. It carries out the reaction Inactivates complement subcomponents C3b, iC3b and C4b by proteolytic cleavage.. Functionally, trypsin-like serine protease that plays an essential role in regulating the immune response by controlling all complement pathways. Inhibits these pathways by cleaving three peptide bonds in the alpha-chain of C3b and two bonds in the alpha-chain of C4b thereby inactivating these proteins. Essential cofactors for these reactions include factor H and C4BP in the fluid phase and membrane cofactor protein/CD46 and CR1 on cell surfaces. The presence of these cofactors on healthy cells allows degradation of deposited C3b by CFI in order to prevent undesired complement activation, while in apoptotic cells or microbes, the absence of such cofactors leads to C3b-mediated complement activation and subsequent opsonization. In Homo sapiens (Human), this protein is Complement factor I (CFI).